We begin with the raw amino-acid sequence, 341 residues long: Radial spoke head 14 homolog (341 aa).

ARM repeat units follow at residues 16–55, 57–96, 99–138, 139–178, 180–217, 219–258, 260–300, and 302–339; these read PTKAAIAYGCRALSKLNEELQSRDLLTRQKALVALCDLMH, PEYVYEAINIGCLESLKTLLQDDDNLVRIKTTEVLYIMAT, VGRVGFLKHDIIQALSLLLSDHQTLCRENLHQAYKHLAQL, PKGAQGIVQSGLIPSLVRKLQKEEDHIQEIILDTLALCLQ, DATEALESQAVPCLKEKLLSQNSEIRSKAARALIAISI, LDGKNQVWKNKVIPILVTLLSDTDEEVKANAAGALMHATV, TEGK…MLAE, and PEGRKLLLSHVPIFRYLLAHKNEAIQRAAEVAIKVIEW.

Belongs to the flagellar radial spoke RSP14 family. Component of the axonemal radial spoke complex 1 (RS1), at least composed of spoke head proteins RSPH1, RSPH3, RSPH9 and the cilia-specific component RSPH4A or sperm-specific component RSPH6A, spoke stalk proteins RSPH14, DNAJB13, DYDC1, ROPN1L and NME5, and the anchor protein IQUB.

It localises to the cytoplasm. It is found in the cytoskeleton. The protein resides in the flagellum axoneme. Functions as part of axonemal radial spoke complexes that play an important part in the motility of sperm and cilia. In Mus musculus (Mouse), this protein is Radial spoke head 14 homolog.